The chain runs to 144 residues: Deoxyuridine 5'-triphosphate nucleotidohydrolase (144 aa).

DUMP is bound by residues Ser66, Arg133, Phe138, and Gly139.

Belongs to the dUTPase family. Homotrimer. Mg(2+) serves as cofactor.

The catalysed reaction is dUTP + H2O = dUMP + diphosphate + H(+). The protein operates within pyrimidine metabolism; dUMP biosynthesis; dUMP from dCTP (dUTP route): step 2/2. Functionally, involved in nucleotide metabolism via production of dUMP, the immediate precursor of thymidine nucleotides, and decreases the intracellular concentration of dUTP so that uracil cannot be incorporated into DNA. This chain is Deoxyuridine 5'-triphosphate nucleotidohydrolase (DUT1), found in Encephalitozoon cuniculi (strain GB-M1) (Microsporidian parasite).